Reading from the N-terminus, the 243-residue chain is GTP cyclohydrolase 1 type 2 (243 aa).

Positions 63, 64, 102, 209, and 213 each coordinate a divalent metal cation.

It belongs to the GTP cyclohydrolase I type 2/NIF3 family. In terms of assembly, homohexamer.

It catalyses the reaction GTP + H2O = 7,8-dihydroneopterin 3'-triphosphate + formate + H(+). It participates in cofactor biosynthesis; 7,8-dihydroneopterin triphosphate biosynthesis; 7,8-dihydroneopterin triphosphate from GTP: step 1/1. Its function is as follows. Converts GTP to dihydroneopterin triphosphate. Is not active with GDP, GMP, ATP, CTP or UTP as substrate. The sequence is that of GTP cyclohydrolase 1 type 2 from Helicobacter pylori (strain ATCC 700392 / 26695) (Campylobacter pylori).